Consider the following 432-residue polypeptide: Gamma-glutamyl phosphate reductase (432 aa).

It belongs to the gamma-glutamyl phosphate reductase family.

Its subcellular location is the cytoplasm. It catalyses the reaction L-glutamate 5-semialdehyde + phosphate + NADP(+) = L-glutamyl 5-phosphate + NADPH + H(+). Its pathway is amino-acid biosynthesis; L-proline biosynthesis; L-glutamate 5-semialdehyde from L-glutamate: step 2/2. Its function is as follows. Catalyzes the NADPH-dependent reduction of L-glutamate 5-phosphate into L-glutamate 5-semialdehyde and phosphate. The product spontaneously undergoes cyclization to form 1-pyrroline-5-carboxylate. The sequence is that of Gamma-glutamyl phosphate reductase from Ruminiclostridium cellulolyticum (strain ATCC 35319 / DSM 5812 / JCM 6584 / H10) (Clostridium cellulolyticum).